A 631-amino-acid chain; its full sequence is 1-deoxy-D-xylulose-5-phosphate synthase (631 aa).

Residues 1-21 form a disordered region; the sequence is MPTTFHEIPRERPLTPLLDSA. Thiamine diphosphate-binding positions include histidine 87 and 128-130; that span reads GHS. Position 159 (aspartate 159) interacts with Mg(2+). Residues 160–161, asparagine 188, phenylalanine 295, and glutamate 377 contribute to the thiamine diphosphate site; that span reads GA. Asparagine 188 serves as a coordination point for Mg(2+).

This sequence belongs to the transketolase family. DXPS subfamily. In terms of assembly, homodimer. Requires Mg(2+) as cofactor. Thiamine diphosphate is required as a cofactor.

It carries out the reaction D-glyceraldehyde 3-phosphate + pyruvate + H(+) = 1-deoxy-D-xylulose 5-phosphate + CO2. The protein operates within metabolic intermediate biosynthesis; 1-deoxy-D-xylulose 5-phosphate biosynthesis; 1-deoxy-D-xylulose 5-phosphate from D-glyceraldehyde 3-phosphate and pyruvate: step 1/1. Functionally, catalyzes the acyloin condensation reaction between C atoms 2 and 3 of pyruvate and glyceraldehyde 3-phosphate to yield 1-deoxy-D-xylulose-5-phosphate (DXP). This is 1-deoxy-D-xylulose-5-phosphate synthase from Ectopseudomonas mendocina (strain ymp) (Pseudomonas mendocina).